The primary structure comprises 205 residues: Rho-related GTP-binding protein RhoQ (205 aa).

16–23 serves as a coordination point for GTP; sequence GDGAVGKT. Residues 38 to 46 carry the Effector region motif; sequence YVPTVFDHY. GTP is bound by residues 63–67 and 121–124; these read DTAGQ and TQID. At Cys202 the chain carries Cysteine methyl ester. The S-farnesyl cysteine moiety is linked to residue Cys202. Residues 203 to 205 constitute a propeptide, removed in mature form; that stretch reads LIT.

It belongs to the small GTPase superfamily. Rho family. In terms of assembly, interacts with CDC42EP4 in a GTP-dependent manner. Interacts with ARHGAP33/TCGAP. Interacts with CDC42EP1, CDC42EP2, CDC42EP3, PARD6A, PARD6G (and probably PARD6B) in a GTP-dependent manner. Part of a quaternary complex containing PARD3, some PARD6 protein (PARD6A, PARD6B or PARD6G) and some atypical PKC protein (PRKCI or PRKCZ). Interacts with EXO70 in a GTP-dependent manner. Interacts with GOPC. In terms of processing, may be post-translationally modified by both palmitoylation and polyisoprenylation.

It is found in the cytoplasm. The protein resides in the cell membrane. With respect to regulation, regulated by guanine nucleotide exchange factors (GEFs) which promote the exchange of bound GDP for free GTP, GTPase activating proteins (GAPs) which increase the GTP hydrolysis activity, and GDP dissociation inhibitors which inhibit the dissociation of the nucleotide from the GTPase. In terms of biological role, plasma membrane-associated small GTPase which cycles between an active GTP-bound and an inactive GDP-bound state. In active state binds to a variety of effector proteins to regulate cellular responses. Involved in epithelial cell polarization processes. May play a role in CFTR trafficking to the plasma membrane. Causes the formation of thin, actin-rich surface projections called filopodia. This is Rho-related GTP-binding protein RhoQ (RHOQ) from Homo sapiens (Human).